A 409-amino-acid chain; its full sequence is Ingression protein 1 (409 aa).

Residues 1–114 (MSEEVWNGNQ…DPKEGYCTWY (114 aa)) form the C2 domain. The disordered stretch occupies residues 300–409 (LSYDEDDDDD…TRKRPPPRLS (110 aa)). The segment covering 302 to 313 (YDEDDDDDDEND) has biased composition (acidic residues). Over residues 315 to 328 (FYSSSHRVSHNYNQ) the composition is skewed to polar residues. The segment covering 360–377 (LDSSSPNSHPHPSGLNSP) has biased composition (low complexity). The span at 384–399 (TTSNSNFNSRKNSMSP) shows a compositional bias: polar residues. Ser392 carries the post-translational modification Phosphoserine. A compositionally biased stretch (basic residues) spans 400–409 (TRKRPPPRLS).

The protein belongs to the INN1/fic1 family. As to quaternary structure, interacts with CYK2, CYK3 and IQG1.

The protein localises to the bud neck. Functionally, required for the ingression of the plasma membrane into the bud neck at the end of cytokinesis, leading to the separation of the mother and daughter cells. Stimulates the synthesis of the primary septum (PS) by CHS2. This is Ingression protein 1 (INN1) from Saccharomyces cerevisiae (strain ATCC 204508 / S288c) (Baker's yeast).